The following is a 912-amino-acid chain: Collagen alpha-2(I) chain (912 aa).

A compositionally biased stretch (low complexity) spans 1-41; it reads GPMGIMGPRGPPGASGAPGPQGFQGPAGEPGEPGQTGPAGA. Disordered regions lie at residues 1-206, 222-739, and 763-912; these read GPMG…GITG, IPGP…GIIG, and GPPG…RGSQ. A compositionally biased stretch (basic and acidic residues) spans 43 to 57; that stretch reads AGEDGHPGKPGRPGE. Low complexity-rich tracts occupy residues 124 to 153, 178 to 192, 229 to 244, 295 to 327, 360 to 382, and 406 to 424; these read VGAP…SAGP, AGPR…ISGP, PGPA…RGIV, PGIR…VRGP, PVGI…RGEP, and AGIA…NGAQ. Over residues 431–440 the composition is skewed to gly residues; it reads GVQGGKGEQG. Low complexity-rich tracts occupy residues 474 to 501 and 517 to 532; these read IPGP…SRGP and IGAP…SGIP. The span at 539–548 shows a compositional bias: gly residues; sequence GIPGGKGEIG. Composition is skewed to low complexity over residues 549-612 and 622-637; these read NPGR…QPGA and NGPV…AGPS. Residues 647–656 are compositionally biased toward gly residues; the sequence is GSRGDGGPPG. Low complexity-rich tracts occupy residues 658 to 667, 728 to 739, 763 to 785, 805 to 815, and 830 to 850; these read TGFPGAAGRT, PQGIIGAPGIIG, GPPG…APGE, NAGPVGAVGAP, and PGPV…PSGP.

The protein belongs to the fibrillar collagen family. Trimers of one alpha 2(I) and two alpha 1(I) chains. Interacts (via C-terminus) with TMEM131 (via PapD-L domain); the interaction is direct and is involved in assembly and TRAPPIII ER-to-Golgi transport complex-dependent secretion of collagen. Prolines at the third position of the tripeptide repeating unit (G-X-Y) are hydroxylated in some or all of the chains. Forms the fibrils of tendon, ligaments and bones. In bones, the fibrils are mineralized with calcium hydroxyapatite.

Its subcellular location is the secreted. The protein localises to the extracellular space. It is found in the extracellular matrix. Functionally, type I collagen is a member of group I collagen (fibrillar forming collagen). The chain is Collagen alpha-2(I) chain from Equus sp.